The chain runs to 163 residues: Lipoprotein signal peptidase (163 aa).

The next 3 helical transmembrane spans lie at 11–31 (ILIA…IATT), 64–84 (MTFF…FFIN), and 88–108 (YNLF…GNFI). Active-site residues include Asp118 and Asp136. The chain crosses the membrane as a helical span at residues 131–151 (IFNIADSSLTIGVILIIIALL).

Belongs to the peptidase A8 family.

The protein resides in the cell membrane. It catalyses the reaction Release of signal peptides from bacterial membrane prolipoproteins. Hydrolyzes -Xaa-Yaa-Zaa-|-(S,diacylglyceryl)Cys-, in which Xaa is hydrophobic (preferably Leu), and Yaa (Ala or Ser) and Zaa (Gly or Ala) have small, neutral side chains.. Its pathway is protein modification; lipoprotein biosynthesis (signal peptide cleavage). This protein specifically catalyzes the removal of signal peptides from prolipoproteins. This is Lipoprotein signal peptidase from Staphylococcus aureus (strain bovine RF122 / ET3-1).